Here is a 572-residue protein sequence, read N- to C-terminus: Laccase-3 (572 aa).

Positions 1–18 (MARTTFLVSVSLFVSAVL) are cleaved as a signal peptide. 2 Plastocyanin-like domains span residues 21–145 (TVEY…LVIY) and 157–304 (IDDE…LIYE). Cu cation contacts are provided by histidine 82, histidine 84, histidine 127, and histidine 129. A disulfide bond links cysteine 103 and cysteine 561. N-linked (GlcNAc...) asparagine glycosylation is found at asparagine 182, asparagine 228, asparagine 294, asparagine 367, and asparagine 405. The Plastocyanin-like 3 domain maps to 422–540 (DMPTLLKILT…EGFAMVFAEA (119 aa)). Cu cation-binding residues include histidine 470, histidine 473, histidine 475, histidine 522, cysteine 523, histidine 524, and histidine 528.

It belongs to the multicopper oxidase family. Homodimer. Cu cation is required as a cofactor. In terms of tissue distribution, in mycelia, at a lower level than LCC4.

The protein resides in the secreted. It carries out the reaction 4 hydroquinone + O2 = 4 benzosemiquinone + 2 H2O. Its function is as follows. Lignin degradation and detoxification of lignin-derived products. This is Laccase-3 (LCC3) from Thanatephorus cucumeris (Black scurf of potato).